The chain runs to 91 residues: MAHKKGVGSSKNGRDSNPKYLGVKKFGGEAVVAGNILVRQRGTKFKPGANVGMGRDHTLFALVDGKVVFTNRGAKGRFISVEAAAPQVAAD.

The tract at residues 1–20 (MAHKKGVGSSKNGRDSNPKY) is disordered.

It belongs to the bacterial ribosomal protein bL27 family.

This chain is Large ribosomal subunit protein bL27, found in Deinococcus geothermalis (strain DSM 11300 / CIP 105573 / AG-3a).